An 836-amino-acid chain; its full sequence is Zinc fingers and homeoboxes protein 2 (836 aa).

The disordered stretch occupies residues 1–61 (MASKRKSTTP…EHSSKETEVV (61 aa)). The segment covering 8–19 (TTPCMVRTSQVL) has biased composition (polar residues). An interaction with EFNB1 region spans residues 27 to 77 (ADRAKDKGAGMPQSDVTKDSWAAEPEHSSKETEVVEVKSMGENLSKKLQGG). Residues 50–61 (EPEHSSKETEVV) are compositionally biased toward basic and acidic residues. A Glycyl lysine isopeptide (Lys-Gly) (interchain with G-Cter in SUMO2) cross-link involves residue lysine 64. 2 C2H2-type zinc fingers span residues 78 to 101 (YECKYCPYSTQNLNEFTEHVDMQH) and 110 to 133 (YVCAECNFTTKKYDSLSDHNSKFH). Positions 164–214 (PITASGPGSSDNDPGVSVGKTPMTKTGKLKADAKKVPKKPDEAAPENHMEG) are disordered. A compositionally biased stretch (basic and acidic residues) spans 192-214 (LKADAKKVPKKPDEAAPENHMEG). The required for homodimerization stretch occupies residues 195–358 (DAKKVPKKPD…PAQLTPTKVS (164 aa)). DNA-binding regions (homeobox) lie at residues 263-324 (NTTK…WSPE), 439-501 (TPAS…IVHI), 530-591 (PQKF…EQAV), and 628-690 (SPSS…TLSW). Positions 263–446 (NTTKYNSALD…PLTPASDRKK (184 aa)) are required for repressor activity. Positions 263–497 (NTTKYNSALD…SDHRYRCQRG (235 aa)) are required for interaction with NFYA. The segment at 317 to 446 (HGISWSPEEV…PLTPASDRKK (130 aa)) is required for nuclear localization. The interval 404-442 (GQKRPLVTPQAAPEPKRPHIAQVPEPPPKVANTPLTPAS) is disordered. A Glycyl lysine isopeptide (Lys-Gly) (interchain with G-Cter in SUMO2) cross-link involves residue lysine 455. 3 stretches are compositionally biased toward basic and acidic residues: residues 699 to 709 (MSDDRGRDAVS), 730 to 746 (YAKDPKALSEEDSEKLV), and 813 to 824 (RVAEGTVERADS). The disordered stretch occupies residues 699–836 (MSDDRGRDAV…DSTPAEAGQA (138 aa)). Phosphoserine occurs at positions 824 and 826.

It belongs to the ZHX family. In terms of assembly, homodimer (via homeobox domain 1). Heterodimer with ZHX1 (via homeobox domain 1). Heterodimer with ZHX3 (via homeobox domain 1). Heterodimerization with ZHX1 is not necessary for repressor activity. Interacts (via homeobox domain) with NFYA (via N-terminus). Interacts with EFNB1 intracellular domain peptide; the interaction enhances ZHX2 transcriptional repression activity. As to expression, expressed in retina where it localizes to Muller glial cells of the inner nuclear layer (at protein level). Detected in heart, brain, spleen, lung, liver, skeletal muscle, kidney and testis.

It localises to the nucleus. Functionally, acts as a transcriptional repressor. Represses the promoter activity of the CDC25C gene stimulated by NFYA. May play a role in retinal development where it regulates the composition of bipolar cell populations, by promoting differentiation of bipolar OFF-type cells. In the brain, may promote maintenance and suppress differentiation of neural progenitor cells in the developing cortex. The chain is Zinc fingers and homeoboxes protein 2 (Zhx2) from Mus musculus (Mouse).